A 327-amino-acid polypeptide reads, in one-letter code: Methionyl-tRNA formyltransferase (327 aa).

121–124 (SLLP) provides a ligand contact to (6S)-5,6,7,8-tetrahydrofolate.

The protein belongs to the Fmt family.

It carries out the reaction L-methionyl-tRNA(fMet) + (6R)-10-formyltetrahydrofolate = N-formyl-L-methionyl-tRNA(fMet) + (6S)-5,6,7,8-tetrahydrofolate + H(+). In terms of biological role, attaches a formyl group to the free amino group of methionyl-tRNA(fMet). The formyl group appears to play a dual role in the initiator identity of N-formylmethionyl-tRNA by promoting its recognition by IF2 and preventing the misappropriation of this tRNA by the elongation apparatus. The protein is Methionyl-tRNA formyltransferase of Burkholderia pseudomallei (strain K96243).